Reading from the N-terminus, the 764-residue chain is 5-methyltetrahydropteroyltriglutamate--homocysteine methyltransferase (764 aa).

Residues 16–19 (RELK) and K115 contribute to the 5-methyltetrahydropteroyltri-L-glutamate site. Residues 435–437 (IGS) and E488 each bind L-homocysteine. L-methionine-binding positions include 435–437 (IGS) and E488. Residues 519–520 (RC) and W565 contribute to the 5-methyltetrahydropteroyltri-L-glutamate site. L-homocysteine is bound at residue D603. D603 contacts L-methionine. E609 is a 5-methyltetrahydropteroyltri-L-glutamate binding site. 3 residues coordinate Zn(2+): H645, C647, and E669. Catalysis depends on H698, which acts as the Proton donor. C730 is a binding site for Zn(2+).

This sequence belongs to the vitamin-B12 independent methionine synthase family. Zn(2+) serves as cofactor.

It carries out the reaction 5-methyltetrahydropteroyltri-L-glutamate + L-homocysteine = tetrahydropteroyltri-L-glutamate + L-methionine. Its pathway is amino-acid biosynthesis; L-methionine biosynthesis via de novo pathway; L-methionine from L-homocysteine (MetE route): step 1/1. Catalyzes the transfer of a methyl group from 5-methyltetrahydrofolate to homocysteine resulting in methionine formation. This Burkholderia thailandensis (strain ATCC 700388 / DSM 13276 / CCUG 48851 / CIP 106301 / E264) protein is 5-methyltetrahydropteroyltriglutamate--homocysteine methyltransferase.